The sequence spans 145 residues: Gene 34.1 protein (145 aa).

Putative excisionase. In Mycobacterium (Mycobacteriophage D29), this protein is Gene 34.1 protein (34.1).